The primary structure comprises 491 residues: MMMILKPLSSHHVSNFRLSVSFLHSVALSDAKVPVEEEGDDAETVFRMINGSNLQVELKESLSSSGIHLSKDLIDRVLKRVRFSHGNPIQTLEFYRYASAIRGFYHSSFSLDTMLYILGRNRKFDQIWELLIETKRKDRSLISPRTMQVVLGRVAKLCSVRQTVESFWKFKRLVPDFFDTACFNALLRTLCQEKSMTDARNVYHSLKHQFQPDLQTFNILLSGWKSSEEAEAFFEEMKGKGLKPDVVTYNSLIDVYCKDREIEKAYKLIDKMREEEETPDVITYTTVIGGLGLIGQPDKAREVLKEMKEYGCYPDVAAYNAAIRNFCIARRLGDADKLVDEMVKKGLSPNATTYNLFFRVLSLANDLGRSWELYVRMLGNECLPNTQSCMFLIKMFKRHEKVDMAMRLWEDMVVKGFGSYSLVSDVLLDLLCDLAKVEEAEKCLLEMVEKGHRPSNVSFKRIKLLMELANKHDEVNNLIQKMAIFSTEIPR.

8 PPR repeats span residues 179 to 209 (DTAC…LKHQ), 210 to 244 (FQPD…GLKP), 245 to 279 (DVVT…EETP), 280 to 314 (DVIT…GCYP), 315 to 349 (DVAA…GLSP), 350 to 384 (NATT…ECLP), 385 to 419 (NTQS…GFGS), and 420 to 454 (YSLV…GHRP).

The protein belongs to the PPR family. P subfamily.

The sequence is that of Putative pentatricopeptide repeat-containing protein At1g02420 from Arabidopsis thaliana (Mouse-ear cress).